Here is a 341-residue protein sequence, read N- to C-terminus: Myb-related transcription factor, partner of profilin (341 aa).

The Myb-like domain occupies 8–80 (VTRLRKPRFS…EVQKRWNDFK (73 aa)). 3 disordered regions span residues 84 to 103 (KEKLARVPHSTQSGTAEEAM), 180 to 210 (LPHLTPSPDPSECPSPPPPGSGTPLLTPSGV), and 309 to 341 (AEPPRSPSPPPPNKRKRFGYLSQRKRRGRWKNL). Residues 184-200 (TPSPDPSECPSPPPPGS) show a composition bias toward pro residues. Basic residues predominate over residues 321–341 (NKRKRFGYLSQRKRRGRWKNL).

It is found in the nucleus. Functionally, transcriptional repressor; DNA-binding protein that specifically recognizes the core sequence 5'-YAAC[GT]G-3'. The chain is Myb-related transcription factor, partner of profilin (mypop) from Xenopus laevis (African clawed frog).